We begin with the raw amino-acid sequence, 340 residues long: Methionine import ATP-binding protein MetN (340 aa).

Residues 2 to 241 enclose the ABC transporter domain; it reads IRIENLTKIY…PQSSVAKEFI (240 aa). 38–45 is an ATP binding site; sequence GLSGAGKS.

The protein belongs to the ABC transporter superfamily. Methionine importer (TC 3.A.1.24) family. In terms of assembly, the complex is composed of two ATP-binding proteins (MetN), two transmembrane proteins (MetI) and a solute-binding protein (MetQ).

It localises to the cell membrane. It carries out the reaction L-methionine(out) + ATP + H2O = L-methionine(in) + ADP + phosphate + H(+). It catalyses the reaction D-methionine(out) + ATP + H2O = D-methionine(in) + ADP + phosphate + H(+). Its function is as follows. Part of the ABC transporter complex MetNIQ involved in methionine import. Responsible for energy coupling to the transport system. The polypeptide is Methionine import ATP-binding protein MetN (Desulfitobacterium hafniense (strain Y51)).